Consider the following 278-residue polypeptide: Non-homologous end joining protein Ku (278 aa).

The Ku domain occupies 9–172; the sequence is ISFGLVNIPV…MHFAQELVDV (164 aa). Residues 255–278 are disordered; the sequence is NQTGAGAKKKPAKTAKRGKSRKAA. Residues 261-278 show a composition bias toward basic residues; it reads AKKKPAKTAKRGKSRKAA.

The protein belongs to the prokaryotic Ku family. Homodimer. Interacts with LigD.

Functionally, with LigD forms a non-homologous end joining (NHEJ) DNA repair enzyme, which repairs dsDNA breaks with reduced fidelity. Binds linear dsDNA with 5'- and 3'- overhangs but not closed circular dsDNA nor ssDNA. Recruits and stimulates the ligase activity of LigD. This Opitutus terrae (strain DSM 11246 / JCM 15787 / PB90-1) protein is Non-homologous end joining protein Ku.